Here is a 244-residue protein sequence, read N- to C-terminus: Gas vesicle protein F (244 aa).

The interval 1 to 109 is N-terminus; the sequence is MTVGLYLYGI…QLKELFAKLS (109 aa). The segment at 110-233 is C-terminus, modifed ferredoxin fold; the sequence is GQREVSIKIF…GDRLRIRYNN (124 aa). The segment at 234 to 244 is C-tail; the sequence is LTAPYTFAQLI.

This sequence belongs to the gas vesicle GvpF/GvpL family. As to quaternary structure, binds GvpA.

The protein resides in the gas vesicle. Functionally, a minor component of the gas vesicle, may be involved in preventing GvpA aggregation during gas vesicle nucleation. Gas vesicles (GV) are hollow, gas filled proteinaceous nanostructures. During planktonic growth they allow positioning of the organism at a favorable depth for light or nutrient acquisition. This Microcystis aeruginosa (strain PCC 7806) protein is Gas vesicle protein F.